A 589-amino-acid chain; its full sequence is Probable translation initiation factor IF-2 (589 aa).

Residues 4-225 (VRSPFVVVMG…AGVSQRFIPR (222 aa)) form the tr-type G domain. A G1 region spans residues 13 to 20 (GHVDVGKT). Position 13-20 (13-20 (GHVDVGKT)) interacts with GTP. The interval 38–42 (MITQH) is G2. Positions 79–82 (DTPG) are G3. Residues 79 to 83 (DTPGH) and 133 to 136 (NKLD) contribute to the GTP site. Positions 133-136 (NKLD) are G4. The interval 201 to 203 (SAV) is G5.

This sequence belongs to the TRAFAC class translation factor GTPase superfamily. Classic translation factor GTPase family. IF-2 subfamily.

Its function is as follows. Function in general translation initiation by promoting the binding of the formylmethionine-tRNA to ribosomes. Seems to function along with eIF-2. The protein is Probable translation initiation factor IF-2 of Pyrobaculum aerophilum (strain ATCC 51768 / DSM 7523 / JCM 9630 / CIP 104966 / NBRC 100827 / IM2).